The primary structure comprises 315 residues: Methionyl-tRNA formyltransferase (315 aa).

110–113 lines the (6S)-5,6,7,8-tetrahydrofolate pocket; that stretch reads SLLP.

It belongs to the Fmt family.

It carries out the reaction L-methionyl-tRNA(fMet) + (6R)-10-formyltetrahydrofolate = N-formyl-L-methionyl-tRNA(fMet) + (6S)-5,6,7,8-tetrahydrofolate + H(+). Functionally, attaches a formyl group to the free amino group of methionyl-tRNA(fMet). The formyl group appears to play a dual role in the initiator identity of N-formylmethionyl-tRNA by promoting its recognition by IF2 and preventing the misappropriation of this tRNA by the elongation apparatus. This is Methionyl-tRNA formyltransferase from Cutibacterium acnes (strain DSM 16379 / KPA171202) (Propionibacterium acnes).